The chain runs to 145 residues: Galectin-5 (145 aa).

N-acetylserine is present on Ser-2. One can recognise a Galectin domain in the interval 17–145; that stretch reads FFTSIPNGLY…GDIQLTHVET (129 aa). 77 to 83 contacts a beta-D-galactoside; sequence WGPEERS.

As to quaternary structure, monomer. As to expression, erythrocytes.

In terms of biological role, may function in erythrocyte differentiation. The protein is Galectin-5 (Lgals5) of Rattus norvegicus (Rat).